A 68-amino-acid polypeptide reads, in one-letter code: MFTMKKSLLLLFFLGTISLSLCEEERGADEEEGDGEKLTKRALSILRGLEKLAKMGIALTNCKATKKC.

An N-terminal signal peptide occupies residues methionine 1–cysteine 22. Residues glutamate 23 to threonine 39 constitute a propeptide that is removed on maturation. A disulfide bridge connects residues cysteine 62 and cysteine 68.

In terms of tissue distribution, expressed by the skin glands.

The protein localises to the secreted. Functionally, antimicrobial peptide. This is Palustrin-1c from Odorrana versabilis (Chinese bamboo leaf odorous frog).